Here is a 120-residue protein sequence, read N- to C-terminus: NAD(P)H-quinone oxidoreductase subunit 3, chloroplastic (120 aa).

3 consecutive transmembrane segments (helical) span residues 3–23 (ILEG…IPVI), 64–84 (MFAL…PWAV), and 89–109 (LGLS…IGLV).

Belongs to the complex I subunit 3 family. In terms of assembly, NDH is composed of at least 16 different subunits, 5 of which are encoded in the nucleus.

It is found in the plastid. Its subcellular location is the chloroplast thylakoid membrane. It catalyses the reaction a plastoquinone + NADH + (n+1) H(+)(in) = a plastoquinol + NAD(+) + n H(+)(out). The enzyme catalyses a plastoquinone + NADPH + (n+1) H(+)(in) = a plastoquinol + NADP(+) + n H(+)(out). NDH shuttles electrons from NAD(P)H:plastoquinone, via FMN and iron-sulfur (Fe-S) centers, to quinones in the photosynthetic chain and possibly in a chloroplast respiratory chain. The immediate electron acceptor for the enzyme in this species is believed to be plastoquinone. Couples the redox reaction to proton translocation, and thus conserves the redox energy in a proton gradient. This chain is NAD(P)H-quinone oxidoreductase subunit 3, chloroplastic, found in Nephroselmis olivacea (Green alga).